The sequence spans 477 residues: M-phase inducer phosphatase 3 (477 aa).

Residues 1 to 20 (MSAEFFSSKREEGSLASGPS) are disordered. The residue at position 2 (S2) is an N-acetylserine. Residues S20 and S38 each carry the phosphoserine modification. T48 carries the phosphothreonine; by CDK1 modification. 3 positions are modified to phosphoserine: S58, S62, and S65. T68 bears the Phosphothreonine; by CDK1 mark. S123 carries the post-translational modification Phosphoserine; by CDK1. S130 is subject to Phosphoserine. T131 carries the post-translational modification Phosphothreonine. Position 169 is a phosphoserine; by CDK1 (S169). 2 positions are modified to phosphoserine; by PLK3: S192 and S199. Position 218 is a phosphoserine; by CDK1 (S218). S220 carries the phosphoserine; by CHEK1, CHEK2, BRSK1, MAPK14 AND MARK3 modification. One can recognise a Rhodanese domain in the interval 325 to 432 (LIEKFYIIDC…FFPEYMELCE (108 aa)). Residue C381 is part of the active site. S476 bears the Phosphoserine mark.

Belongs to the MPI phosphatase family. As to quaternary structure, interacts with MAPK14 and 14-3-3 proteins. When phosphorylated on Ser-130 and/or Thr-131, interacts with PLK1. Interacts with MARK3/C-TAK1. Phosphorylated by CHEK1 and MAPK14 at Ser-220. This phosphorylation creates a binding site for 14-3-3 protein and inhibits the phosphatase. Phosphorylated by PLK4. Phosphorylated by PLK1, leading to activate the phosphatase activity. Phosphorylation by PLK3 at Ser-192 promotes nuclear translocation. Ser-199 is a minor phosphorylation site. Phosphorylation by CDK1 occurs at G2 and G2-M transition and leads to increased activity.

It localises to the nucleus. The catalysed reaction is O-phospho-L-tyrosyl-[protein] + H2O = L-tyrosyl-[protein] + phosphate. Its function is as follows. Functions as a dosage-dependent inducer in mitotic control. Tyrosine protein phosphatase required for progression of the cell cycle. When phosphorylated, highly effective in activating G2 cells into prophase. Directly dephosphorylates CDK1 and activates its kinase activity. The protein is M-phase inducer phosphatase 3 (CDC25C) of Bos taurus (Bovine).